Here is a 347-residue protein sequence, read N- to C-terminus: NADH-ubiquinone oxidoreductase chain 2 (347 aa).

A run of 11 helical transmembrane segments spans residues 3–23 (PLIF…VMTT), 25–45 (HWVM…PILM), 59–79 (YFLT…INLV), 96–116 (IIMT…FWVP), 122–142 (VQLS…MSIL), 149–169 (INLD…GWGG), 178–198 (IMAY…VYNP), 200–220 (MALL…MMLM), 240–260 (LTTA…LSGF), 276–296 (MIMP…YMRL), and 326–346 (LSPL…LALL).

This sequence belongs to the complex I subunit 2 family. Core subunit of respiratory chain NADH dehydrogenase (Complex I) which is composed of 45 different subunits. Interacts with TMEM242.

It is found in the mitochondrion inner membrane. It carries out the reaction a ubiquinone + NADH + 5 H(+)(in) = a ubiquinol + NAD(+) + 4 H(+)(out). Functionally, core subunit of the mitochondrial membrane respiratory chain NADH dehydrogenase (Complex I) which catalyzes electron transfer from NADH through the respiratory chain, using ubiquinone as an electron acceptor. Essential for the catalytic activity and assembly of complex I. This Nyctimene albiventer (Common tube-nosed fruit bat) protein is NADH-ubiquinone oxidoreductase chain 2.